An 85-amino-acid chain; its full sequence is Large ribosomal subunit protein bL27 (85 aa).

The disordered stretch occupies residues 1–22 (MAHKKAGGSSRNGRDSHSKRLG).

This sequence belongs to the bacterial ribosomal protein bL27 family.

This chain is Large ribosomal subunit protein bL27, found in Nitrosomonas europaea (strain ATCC 19718 / CIP 103999 / KCTC 2705 / NBRC 14298).